The primary structure comprises 118 residues: Large ribosomal subunit protein bL12 (118 aa).

An N-acetylmethionine; in form MA2 modification is found at M1.

Belongs to the bacterial ribosomal protein bL12 family. As to quaternary structure, homodimer. Part of the ribosomal stalk of the 50S ribosomal subunit. Forms a multimeric L10(L12)X complex, where L10 forms an elongated spine to which 2 to 4 L12 dimers bind in a sequential fashion. Binds GTP-bound translation factors. In terms of processing, acetylation of Met-1 converts MA1 to MA2.

Functionally, forms part of the ribosomal stalk which helps the ribosome interact with GTP-bound translation factors. Is thus essential for accurate translation. This chain is Large ribosomal subunit protein bL12, found in Micrococcus luteus (Micrococcus lysodeikticus).